Consider the following 277-residue polypeptide: Phosphatidylglycerol--prolipoprotein diacylglyceryl transferase (277 aa).

A run of 3 helical transmembrane segments spans residues Leu-17–Gly-37, Ile-63–Tyr-83, and Gly-101–His-121. Arg-146 serves as a coordination point for a 1,2-diacyl-sn-glycero-3-phospho-(1'-sn-glycerol). 3 consecutive transmembrane segments (helical) span residues Ser-182 to Ala-202, Gly-209 to Phe-229, and Ala-234 to Ile-254.

This sequence belongs to the Lgt family.

It localises to the cell inner membrane. It catalyses the reaction L-cysteinyl-[prolipoprotein] + a 1,2-diacyl-sn-glycero-3-phospho-(1'-sn-glycerol) = an S-1,2-diacyl-sn-glyceryl-L-cysteinyl-[prolipoprotein] + sn-glycerol 1-phosphate + H(+). It participates in protein modification; lipoprotein biosynthesis (diacylglyceryl transfer). Its function is as follows. Catalyzes the transfer of the diacylglyceryl group from phosphatidylglycerol to the sulfhydryl group of the N-terminal cysteine of a prolipoprotein, the first step in the formation of mature lipoproteins. This Verminephrobacter eiseniae (strain EF01-2) protein is Phosphatidylglycerol--prolipoprotein diacylglyceryl transferase.